A 31-amino-acid chain; its full sequence is Cytochrome b6-f complex subunit 6 (31 aa).

A helical membrane pass occupies residues Leu-4 to Asn-26.

It belongs to the PetL family. As to quaternary structure, the 4 large subunits of the cytochrome b6-f complex are cytochrome b6, subunit IV (17 kDa polypeptide, PetD), cytochrome f and the Rieske protein, while the 4 small subunits are PetG, PetL, PetM and PetN. The complex functions as a dimer.

The protein resides in the plastid. Its subcellular location is the chloroplast thylakoid membrane. In terms of biological role, component of the cytochrome b6-f complex, which mediates electron transfer between photosystem II (PSII) and photosystem I (PSI), cyclic electron flow around PSI, and state transitions. PetL is important for photoautotrophic growth as well as for electron transfer efficiency and stability of the cytochrome b6-f complex. The chain is Cytochrome b6-f complex subunit 6 from Phalaenopsis aphrodite subsp. formosana (Moth orchid).